A 39-amino-acid chain; its full sequence is Cytochrome b559 subunit beta (39 aa).

The helical transmembrane segment at 14–30 (WLAIHGLAVPTVFFLGS) threads the bilayer. His-18 provides a ligand contact to heme.

In terms of assembly, heterodimer of an alpha subunit and a beta subunit. PSII is composed of 1 copy each of membrane proteins PsbA, PsbB, PsbC, PsbD, PsbE, PsbF, PsbH, PsbI, PsbJ, PsbK, PsbL, PsbM, PsbT, PsbX, PsbY, PsbZ, Psb30/Ycf12, at least 3 peripheral proteins of the oxygen-evolving complex and a large number of cofactors. It forms dimeric complexes. The cofactor is heme b. In terms of processing, the N-terminus is blocked.

The protein resides in the plastid. Its subcellular location is the chloroplast thylakoid membrane. Functionally, this b-type cytochrome is tightly associated with the reaction center of photosystem II (PSII). PSII is a light-driven water:plastoquinone oxidoreductase that uses light energy to abstract electrons from H(2)O, generating O(2) and a proton gradient subsequently used for ATP formation. It consists of a core antenna complex that captures photons, and an electron transfer chain that converts photonic excitation into a charge separation. This chain is Cytochrome b559 subunit beta, found in Spinacia oleracea (Spinach).